Consider the following 228-residue polypeptide: 7-cyano-7-deazaguanine synthase (228 aa).

ATP is bound at residue 11-21 (LSGGLDSATCL). Cys-191, Cys-201, Cys-204, and Cys-207 together coordinate Zn(2+).

It belongs to the QueC family. Zn(2+) serves as cofactor.

The catalysed reaction is 7-carboxy-7-deazaguanine + NH4(+) + ATP = 7-cyano-7-deazaguanine + ADP + phosphate + H2O + H(+). The protein operates within purine metabolism; 7-cyano-7-deazaguanine biosynthesis. Functionally, catalyzes the ATP-dependent conversion of 7-carboxy-7-deazaguanine (CDG) to 7-cyano-7-deazaguanine (preQ(0)). The sequence is that of 7-cyano-7-deazaguanine synthase from Azoarcus sp. (strain BH72).